Here is a 603-residue protein sequence, read N- to C-terminus: Variable flagella 3 (603 aa).

Residues 169-289 (GGEVSAELRR…TEDLEARDRR (121 aa)) are a coiled coil. Over residues 288 to 297 (RRMNSTDRIR) the composition is skewed to basic and acidic residues. Disordered regions lie at residues 288–526 (RRMN…PARA) and 539–564 (AGRG…SSKS). Positions 337–348 (SRSNSRGRGTSS) are enriched in low complexity. Positions 364 to 380 (PRFDPTEYVRQRKERES) are enriched in basic and acidic residues. Residues 397 to 406 (AGTSRASSVV) show a composition bias toward polar residues. Over residues 486–510 (GASGGGAGGWSKFPGGGGGGVGGSG) the composition is skewed to gly residues. The span at 511–520 (QRISSNSPRS) shows a compositional bias: polar residues.

Belongs to the CCDC61 family.

It localises to the cytoplasm. It is found in the cytoskeleton. The protein localises to the flagellum basal body. In terms of biological role, required for normal flagella and striated fiber formation. The protein is Variable flagella 3 of Chlamydomonas reinhardtii (Chlamydomonas smithii).